A 689-amino-acid polypeptide reads, in one-letter code: Glycine--tRNA ligase beta subunit (689 aa).

It belongs to the class-II aminoacyl-tRNA synthetase family. Tetramer of two alpha and two beta subunits.

Its subcellular location is the cytoplasm. It catalyses the reaction tRNA(Gly) + glycine + ATP = glycyl-tRNA(Gly) + AMP + diphosphate. This is Glycine--tRNA ligase beta subunit from Oenococcus oeni (strain ATCC BAA-331 / PSU-1).